The primary structure comprises 227 residues: Phosphatidylserine decarboxylase proenzyme (227 aa).

Residue serine 181 is the Schiff-base intermediate with substrate; via pyruvic acid of the active site. Position 181 is a pyruvic acid (Ser); by autocatalysis (serine 181).

The protein belongs to the phosphatidylserine decarboxylase family. PSD-A subfamily. In terms of assembly, heterodimer of a large membrane-associated beta subunit and a small pyruvoyl-containing alpha subunit. Pyruvate serves as cofactor. Is synthesized initially as an inactive proenzyme. Formation of the active enzyme involves a self-maturation process in which the active site pyruvoyl group is generated from an internal serine residue via an autocatalytic post-translational modification. Two non-identical subunits are generated from the proenzyme in this reaction, and the pyruvate is formed at the N-terminus of the alpha chain, which is derived from the carboxyl end of the proenzyme. The post-translation cleavage follows an unusual pathway, termed non-hydrolytic serinolysis, in which the side chain hydroxyl group of the serine supplies its oxygen atom to form the C-terminus of the beta chain, while the remainder of the serine residue undergoes an oxidative deamination to produce ammonia and the pyruvoyl prosthetic group on the alpha chain.

The protein resides in the cell membrane. It carries out the reaction a 1,2-diacyl-sn-glycero-3-phospho-L-serine + H(+) = a 1,2-diacyl-sn-glycero-3-phosphoethanolamine + CO2. It participates in phospholipid metabolism; phosphatidylethanolamine biosynthesis; phosphatidylethanolamine from CDP-diacylglycerol: step 2/2. Catalyzes the formation of phosphatidylethanolamine (PtdEtn) from phosphatidylserine (PtdSer). This Anaplasma phagocytophilum (strain HZ) protein is Phosphatidylserine decarboxylase proenzyme.